The following is a 255-amino-acid chain: CCAAT/enhancer-binding protein delta (255 aa).

Disordered stretches follow at residues Met-1 to Ala-42, Gly-91 to Leu-121, and Pro-138 to Gln-206. Residue Lys-107 forms a Glycyl lysine isopeptide (Lys-Gly) (interchain with G-Cter in SUMO) linkage. The span at Gln-141 to Gly-161 shows a compositional bias: pro residues. A compositionally biased stretch (basic and acidic residues) spans Ala-163–Asn-187. The region spanning Ser-177 to Leu-240 is the bZIP domain. The basic motif stretch occupies residues Arg-181–Lys-208. The interval Leu-212 to Leu-240 is leucine-zipper.

Belongs to the bZIP family. C/EBP subfamily. Binds DNA as a homodimer and as a heterodimer. Can form stable heterodimers with CEBPA, CEBPB and CEBPE. Directly interacts with SPI1/PU.1; this interaction does not affect DNA-binding properties of each partner. Interacts with PRDM16.

The protein resides in the nucleus. Functionally, transcription activator that recognizes two different DNA motifs: the CCAAT homology common to many promoters and the enhanced core homology common to many enhancers. Important transcription factor regulating the expression of genes involved in immune and inflammatory responses. Transcriptional activator that enhances IL6 transcription alone and as heterodimer with CEBPB. This chain is CCAAT/enhancer-binding protein delta (CEBPD), found in Ovis aries (Sheep).